Consider the following 618-residue polypeptide: DNA mismatch repair protein MutL (618 aa).

A compositionally biased stretch (low complexity) spans 367–381 (EPTAAREPATPRYSG). The segment at 367-402 (EPTAAREPATPRYSGGASGGNGGRQSAGGWPHAQPG) is disordered. Gly residues predominate over residues 382–392 (GASGGNGGRQS).

The protein belongs to the DNA mismatch repair MutL/HexB family.

In terms of biological role, this protein is involved in the repair of mismatches in DNA. It is required for dam-dependent methyl-directed DNA mismatch repair. May act as a 'molecular matchmaker', a protein that promotes the formation of a stable complex between two or more DNA-binding proteins in an ATP-dependent manner without itself being part of a final effector complex. The polypeptide is DNA mismatch repair protein MutL (Salmonella gallinarum (strain 287/91 / NCTC 13346)).